A 315-amino-acid chain; its full sequence is tRNA dimethylallyltransferase (315 aa).

ATP is bound at residue 13-20 (GPTASGKT). 15–20 (TASGKT) lines the substrate pocket. 4 interaction with substrate tRNA regions span residues 38–41 (DSAL), 162–166 (QRLSR), 243–248 (RCVGYR), and 276–283 (KRQITWLR).

It belongs to the IPP transferase family. Monomer. The cofactor is Mg(2+).

The catalysed reaction is adenosine(37) in tRNA + dimethylallyl diphosphate = N(6)-dimethylallyladenosine(37) in tRNA + diphosphate. In terms of biological role, catalyzes the transfer of a dimethylallyl group onto the adenine at position 37 in tRNAs that read codons beginning with uridine, leading to the formation of N6-(dimethylallyl)adenosine (i(6)A). This is tRNA dimethylallyltransferase from Vibrio cholerae serotype O1 (strain ATCC 39541 / Classical Ogawa 395 / O395).